A 128-amino-acid polypeptide reads, in one-letter code: uncharacterized protein (128 aa).

The interval 25 to 61 is disordered; that stretch reads LPNRLPEGSTVGPKPDSSWEAGSQGNWGLTSSGAGQD. The segment covering 44–61 has biased composition (polar residues); the sequence is EAGSQGNWGLTSSGAGQD.

This is an uncharacterized protein from Homo sapiens (Human).